A 172-amino-acid polypeptide reads, in one-letter code: uncharacterized protein (172 aa).

In terms of domain architecture, PfpI endopeptidase spans 3–171; that stretch reads KKVAIILSNE…FNREIVKQLQ (169 aa).

Belongs to the peptidase C56 family.

This is an uncharacterized protein from Staphylococcus haemolyticus (strain JCSC1435).